The chain runs to 485 residues: Probable coniferyl aldehyde dehydrogenase (485 aa).

Active-site residues include E226 and C260.

The protein belongs to the aldehyde dehydrogenase family.

It carries out the reaction (E)-coniferaldehyde + NADP(+) + H2O = (E)-ferulate + NADPH + 2 H(+). The catalysed reaction is (E)-coniferaldehyde + NAD(+) + H2O = (E)-ferulate + NADH + 2 H(+). The polypeptide is Probable coniferyl aldehyde dehydrogenase (calB) (Caulobacter vibrioides (strain ATCC 19089 / CIP 103742 / CB 15) (Caulobacter crescentus)).